The chain runs to 1163 residues: Pesticidal crystal protein Cry26Aa (1163 aa).

The protein belongs to the delta endotoxin family.

Its function is as follows. Promotes colloidosmotic lysis by binding to the midgut epithelial cells of insects. This chain is Pesticidal crystal protein Cry26Aa (cry26Aa), found in Bacillus thuringiensis subsp. finitimus.